Consider the following 581-residue polypeptide: Serine/threonine protein phosphatase 2A 55 kDa regulatory subunit B alpha isoform (581 aa).

The interval 1–27 (MMNPDGGDGDRLEAAGAGSSSAQQGHP) is disordered. Low complexity predominate over residues 14 to 25 (AAGAGSSSAQQG). WD repeat units lie at residues 47-86 (QEVD…DNAS) and 123-164 (EIEE…VKQV). Residues 172-189 (RSVGTGTSSSASTSSSRG) show a composition bias toward low complexity. The interval 172–192 (RSVGTGTSSSASTSSSRGLLP) is disordered. WD repeat units follow at residues 241–279 (AHDY…QSFN), 290–330 (DLTE…LCDN), 349–387 (EIIA…GPVS), and 492–530 (DFST…RKFI).

This sequence belongs to the phosphatase 2A regulatory subunit B family. As to quaternary structure, PP2A consists of a common heteromeric enzyme, composed of a catalytic subunit (subunits C), a constant regulatory subunit (subunit A), and a variety of regulatory subunits such as subunits B (the R2/B/PR55/B55, R3/B''/PR72/PR130/PR59 and R5/B'/B56 families).

Functionally, the B regulatory subunit may modulate substrate selectivity and catalytic activity, and may also direct the localization of the catalytic enzyme to a particular subcellular compartment. The sequence is that of Serine/threonine protein phosphatase 2A 55 kDa regulatory subunit B alpha isoform from Oryza sativa subsp. japonica (Rice).